The primary structure comprises 428 residues: Enolase (428 aa).

A (2R)-2-phosphoglycerate-binding site is contributed by Gln165. Glu207 acts as the Proton donor in catalysis. Asp244, Glu283, and Asp310 together coordinate Mg(2+). Residues Lys335, Arg364, Ser365, and Lys386 each contribute to the (2R)-2-phosphoglycerate site. The active-site Proton acceptor is Lys335.

The protein belongs to the enolase family. Mg(2+) is required as a cofactor.

Its subcellular location is the cytoplasm. The protein resides in the secreted. It localises to the cell surface. The enzyme catalyses (2R)-2-phosphoglycerate = phosphoenolpyruvate + H2O. It functions in the pathway carbohydrate degradation; glycolysis; pyruvate from D-glyceraldehyde 3-phosphate: step 4/5. Functionally, catalyzes the reversible conversion of 2-phosphoglycerate (2-PG) into phosphoenolpyruvate (PEP). It is essential for the degradation of carbohydrates via glycolysis. In Chlamydia pneumoniae (Chlamydophila pneumoniae), this protein is Enolase.